We begin with the raw amino-acid sequence, 89 residues long: Small ribosomal subunit protein uS15 (89 aa).

The protein belongs to the universal ribosomal protein uS15 family. Part of the 30S ribosomal subunit. Forms a bridge to the 50S subunit in the 70S ribosome, contacting the 23S rRNA.

In terms of biological role, one of the primary rRNA binding proteins, it binds directly to 16S rRNA where it helps nucleate assembly of the platform of the 30S subunit by binding and bridging several RNA helices of the 16S rRNA. Forms an intersubunit bridge (bridge B4) with the 23S rRNA of the 50S subunit in the ribosome. This is Small ribosomal subunit protein uS15 from Bordetella avium (strain 197N).